The following is a 203-amino-acid chain: Holliday junction branch migration complex subunit RuvA (203 aa).

Positions 1-63 (MIVSLRGTVE…EESQTLYGFT (63 aa)) are domain I. The interval 64–142 (DDASRRMFVL…GFNDGIPAAA (79 aa)) is domain II. Positions 143-150 (QPQLSIAV) are flexible linker. The domain III stretch occupies residues 150-203 (VDQAVQEQVLEALVGLGFSEKIALPVLSRVLRDSPELSKSQALRAALSELGTKN).

Belongs to the RuvA family. Homotetramer. Forms an RuvA(8)-RuvB(12)-Holliday junction (HJ) complex. HJ DNA is sandwiched between 2 RuvA tetramers; dsDNA enters through RuvA and exits via RuvB. An RuvB hexamer assembles on each DNA strand where it exits the tetramer. Each RuvB hexamer is contacted by two RuvA subunits (via domain III) on 2 adjacent RuvB subunits; this complex drives branch migration. In the full resolvosome a probable DNA-RuvA(4)-RuvB(12)-RuvC(2) complex forms which resolves the HJ.

Its subcellular location is the cytoplasm. Its function is as follows. The RuvA-RuvB-RuvC complex processes Holliday junction (HJ) DNA during genetic recombination and DNA repair, while the RuvA-RuvB complex plays an important role in the rescue of blocked DNA replication forks via replication fork reversal (RFR). RuvA specifically binds to HJ cruciform DNA, conferring on it an open structure. The RuvB hexamer acts as an ATP-dependent pump, pulling dsDNA into and through the RuvAB complex. HJ branch migration allows RuvC to scan DNA until it finds its consensus sequence, where it cleaves and resolves the cruciform DNA. The sequence is that of Holliday junction branch migration complex subunit RuvA from Corynebacterium diphtheriae (strain ATCC 700971 / NCTC 13129 / Biotype gravis).